A 257-amino-acid chain; its full sequence is Zinc uptake system ATP-binding protein ZurA (257 aa).

The ABC transporter domain maps to 5 to 241 (IEVNNVSYHY…ADRELEILAE (237 aa)). 37 to 44 (GPNGSGKS) serves as a coordination point for ATP.

It belongs to the ABC transporter superfamily.

Functionally, involved in a zinc uptake transport system. The protein is Zinc uptake system ATP-binding protein ZurA (zurA) of Listeria monocytogenes serovar 1/2a (strain ATCC BAA-679 / EGD-e).